A 390-amino-acid polypeptide reads, in one-letter code: Centrosomal protein of 44 kDa (390 aa).

The tract at residues 11–195 is binds with microtubules and centrioles; sequence RNLEQVLRLL…ISEDTLSPIT (185 aa). The stretch at 233–269 forms a coiled coil; sequence EITALQTMLAECQENLKKLTSIEKRLDCLEQKMKGKV. The segment at 322–348 is disordered; sequence RKSEVERPASIPLSSGYSTASSDSTPR. Phosphoserine occurs at positions 331 and 345. Over residues 335 to 345 the composition is skewed to low complexity; sequence SSGYSTASSDS. Thr346 is subject to Phosphothreonine. A coiled-coil region spans residues 361–385; it reads SEETTIQKMERMKKMFEETAELLKC.

As to quaternary structure, interacts with CROCC. Interacts with POC1B; the interaction is direct and recruits POC1B to centriolar microtubules. Binds to centriolar microtubules.

Its subcellular location is the cytoplasm. The protein resides in the cytoskeleton. The protein localises to the microtubule organizing center. It localises to the centrosome. It is found in the centriole. Its subcellular location is the spindle pole. The protein resides in the midbody. Functionally, centriole-enriched microtubule-binding protein involved in centriole biogenesis. In collaboration with CEP295 and POC1B, is required for the centriole-to-centrosome conversion by ensuring the formation of bona fide centriole wall. Functions as a linker component that maintains centrosome cohesion. Associates with CROCC and regulates its stability and localization to the centrosome. This is Centrosomal protein of 44 kDa (CEP44) from Homo sapiens (Human).